Here is a 318-residue protein sequence, read N- to C-terminus: Mitochondrial coenzyme A transporter SLC25A42 (318 aa).

3 Solcar repeats span residues 31–117, 129–214, and 224–312; these read RQVL…YKRI, LPPW…LKSL, and PYPF…MQIL. 6 helical membrane-spanning segments follow: residues 33 to 53, 89 to 109, 135 to 155, 186 to 206, 230 to 250, and 293 to 313; these read VLSSLLSGALAGALAKTAVAP, LWRGNSATMVRVIPYAAIQFS, LLAGALAGTTAASLTYPLDLV, LYFGFTPTVLGVIPYAGLSFF, MVFGACAGLIGQSASYPLDVV, and LKGPIAVGISFTTFDLMQILL.

It belongs to the mitochondrial carrier (TC 2.A.29) family.

It localises to the mitochondrion inner membrane. It carries out the reaction ADP(out) + CoA(in) = ADP(in) + CoA(out). It catalyses the reaction 3'-dephospho-CoA(in) + ADP(out) = 3'-dephospho-CoA(out) + ADP(in). The enzyme catalyses adenosine 3',5'-bisphosphate(in) + ADP(out) = adenosine 3',5'-bisphosphate(out) + ADP(in). The catalysed reaction is AMP(in) + ADP(out) = AMP(out) + ADP(in). It carries out the reaction dADP(in) + ADP(out) = dADP(out) + ADP(in). It catalyses the reaction ADP(in) + ATP(out) = ADP(out) + ATP(in). In terms of biological role, mitochondrial carrier mediating the transport of coenzyme A (CoA) in mitochondria in exchange for intramitochondrial (deoxy)adenine nucleotides and adenosine 3',5'-diphosphate. The protein is Mitochondrial coenzyme A transporter SLC25A42 (Slc25a42) of Mus musculus (Mouse).